Reading from the N-terminus, the 474-residue chain is PTS system MurNAc-GlcNAc-specific EIIBC component (474 aa).

Positions 5–87 constitute a PTS EIIB type-1 domain; that stretch reads ERLAKDITHA…ADQSGATLAE (83 aa). Cysteine 27 acts as the Phosphocysteine intermediate; for EIIB activity in catalysis. One can recognise a PTS EIIC type-1 domain in the interval 124-474; it reads KSIANIFIPL…GTTKEMRNPE (351 aa). Helical transmembrane passes span 129–149, 167–187, 193–213, 228–248, 268–288, 299–319, 343–363, 378–398, 402–422, and 444–464; these read IFIPLIPAFIGAGLIGGIAAI, IVTVLNVIKDGMLFYLAIFTG, VFGATPGLGGVIGGTTLLTGI, LAAGQGGIIGVIFAVWLLSMV, ITLLLIGLLTIFIIMPLAGFV, IIGVGGIFSGFIIGAFFLPLV, LLPIAAMAGAGQVGAAIALWV, ALPVGFLGIGEPLIYGVTLPL, FFTACIGGGVGGAVIGGIGHI, and LGYIVGLLAAYAGGFIFTYFF.

It localises to the cell membrane. The enzyme catalyses N-acetyl-beta-D-muramate-(1-&gt;4)-N-acetyl-D-glucosamine(out) + N(pros)-phospho-L-histidyl-[protein] = 6-phospho-N-acetyl-beta-D-muramate-(1-&gt;4)-N-acetyl-D-glucosamine(in) + L-histidyl-[protein]. Its pathway is cell wall biogenesis; peptidoglycan recycling. Functionally, the phosphoenolpyruvate-dependent sugar phosphotransferase system (sugar PTS), a major carbohydrate active transport system, catalyzes the phosphorylation of incoming sugar substrates concomitantly with their translocation across the cell membrane. This system is involved in the uptake and phosphorylation of MurNAc-GlcNAc, the principle peptidoglycan turnover product of S.aureus, yielding cytoplasmic MurNAc 6P-GlcNAc. This is PTS system MurNAc-GlcNAc-specific EIIBC component from Staphylococcus epidermidis (strain ATCC 35984 / DSM 28319 / BCRC 17069 / CCUG 31568 / BM 3577 / RP62A).